The following is a 456-amino-acid chain: Outer membrane efflux protein BepC (456 aa).

Residues 1–28 form the signal peptide; it reads MRYTVFKACKELVAAAVLLSGTVLTGQA. Residues 312-341 are a coiled coil; sequence RTSAQIRQSKEQLGQARIEVDVVQDKVRQA.

Belongs to the outer membrane factor (OMF) (TC 1.B.17) family. Probably part of a tripartite efflux pump, which is composed of an outer membrane efflux protein, an inner membrane protein and a protein that expands the periplasmic space. Could form a tripartite pump with BepD and BepE or with BepF and BepG.

Its subcellular location is the cell outer membrane. Involved in the efflux of toxic and relatively hydrophobic compounds. Influences survival inside the host. The sequence is that of Outer membrane efflux protein BepC (bepC) from Brucella suis biovar 1 (strain 1330).